A 248-amino-acid chain; its full sequence is uncharacterized protein (248 aa).

Residue 8–32 (EVALVTGASSGIGKAIALELASAGL) participates in NADP(+) binding. Residue serine 134 coordinates substrate. Tyrosine 147 (proton acceptor) is an active-site residue.

Belongs to the short-chain dehydrogenases/reductases (SDR) family.

This is an uncharacterized protein from Sinorhizobium fredii (strain NBRC 101917 / NGR234).